Consider the following 102-residue polypeptide: Large ribosomal subunit protein bL21 (102 aa).

It belongs to the bacterial ribosomal protein bL21 family. Part of the 50S ribosomal subunit. Contacts protein L20.

Its function is as follows. This protein binds to 23S rRNA in the presence of protein L20. The chain is Large ribosomal subunit protein bL21 from Onion yellows phytoplasma (strain OY-M).